We begin with the raw amino-acid sequence, 546 residues long: Chaperonin GroEL 1 (546 aa).

ATP is bound by residues 29–32 (TIGP), 86–90 (DGTTT), Gly-413, 477–479 (NAA), and Asp-493. Positions 523–546 (PAEPAPQDGHGHGHGHSHPQGPGF) are disordered.

Belongs to the chaperonin (HSP60) family. Forms a cylinder of 14 subunits composed of two heptameric rings stacked back-to-back. Interacts with the co-chaperonin GroES.

The protein localises to the cytoplasm. It carries out the reaction ATP + H2O + a folded polypeptide = ADP + phosphate + an unfolded polypeptide.. Its function is as follows. Together with its co-chaperonin GroES, plays an essential role in assisting protein folding. The GroEL-GroES system forms a nano-cage that allows encapsulation of the non-native substrate proteins and provides a physical environment optimized to promote and accelerate protein folding. In Frankia casuarinae (strain DSM 45818 / CECT 9043 / HFP020203 / CcI3), this protein is Chaperonin GroEL 1.